A 231-amino-acid polypeptide reads, in one-letter code: MAKKGKKYQEAAQKVDSTKFYSVEEAIKLAKETSTVNFDASVEVAFRLGIDVRKNDQQIRGAVVLPNGTGKTQRVLVFAKGEKLKEAEAAGADFVGDSEYINKINQGWFDFDVIVATPDMMGEVGKLGRVLGPKGLMPNPKTGTVTMDVTKAVQEIKAGKVEYRAEKSGIVHAAIGKVSFDADKLVENFNTLKDVLAKAKPASSKGTYFKTVAVTTTMGPGIKIDPSEVRN.

The protein belongs to the universal ribosomal protein uL1 family. Part of the 50S ribosomal subunit.

Functionally, binds directly to 23S rRNA. The L1 stalk is quite mobile in the ribosome, and is involved in E site tRNA release. Its function is as follows. Protein L1 is also a translational repressor protein, it controls the translation of the L11 operon by binding to its mRNA. This is Large ribosomal subunit protein uL1 from Macrococcus caseolyticus (strain JCSC5402) (Macrococcoides caseolyticum).